The following is a 700-amino-acid chain: Calpain-2 catalytic subunit (700 aa).

Residue alanine 2 is modified to N-acetylalanine. The propeptide at alanine 2–glycine 19 is anchors to the small subunit. The 300-residue stretch at leucine 45–threonine 344 folds into the Calpain catalytic domain. Glycine 91 and aspartate 96 together coordinate Ca(2+). Cysteine 105 is a catalytic residue. Ca(2+) contacts are provided by glutamate 175, glutamine 229, and lysine 230. Active-site residues include histidine 262 and asparagine 286. Residues glutamate 292, aspartate 299, and glutamate 323 each coordinate Ca(2+). A domain III region spans residues proline 345–aspartate 514. Residues glutamate 515–aspartate 529 form a linker region. Residues isoleucine 530 to leucine 700 are domain IV. Residues alanine 542, aspartate 545, glutamate 547, glutamate 552, aspartate 585, aspartate 587, serine 589, lysine 591, glutamate 596, aspartate 615, aspartate 617, serine 619, threonine 621, glutamate 626, aspartate 658, and asparagine 661 each coordinate Ca(2+). EF-hand domains lie at phenylalanine 572–phenylalanine 597, threonine 602–lysine 637, and aspartate 652–leucine 672.

Belongs to the peptidase C2 family. In terms of assembly, forms a heterodimer with a small (regulatory) subunit (CAPNS1). Interacts with CPEB3; this leads to cleavage of CPEB3. Ca(2+) serves as cofactor. In terms of tissue distribution, ubiquitous.

The protein resides in the cytoplasm. The protein localises to the cell membrane. It carries out the reaction Broad endopeptidase specificity.. Activated by 200-1000 micromolar concentrations of calcium and inhibited by calpastatin. Functionally, calcium-regulated non-lysosomal thiol-protease which catalyzes limited proteolysis of substrates involved in cytoskeletal remodeling and signal transduction. Proteolytically cleaves MYOC at 'Arg-226'. Proteolytically cleaves CPEB3 following neuronal stimulation which abolishes CPEB3 translational repressor activity, leading to translation of CPEB3 target mRNAs. In Bos taurus (Bovine), this protein is Calpain-2 catalytic subunit (CAPN2).